Here is a 297-residue protein sequence, read N- to C-terminus: Protoheme IX farnesyltransferase (297 aa).

The next 9 membrane-spanning stretches (helical) occupy residues 23–43 (VTQL…PGLP), 49–69 (VFGT…NCLI), 90–110 (ISAA…MLVL), 117–137 (LTMW…TVIL), 144–164 (NIVI…AAVA), 171–191 (AWVL…ALAL), 215–235 (RLHI…PYII), 238–258 (SGLL…AYAW), and 277–297 (ILYL…GLLA).

This sequence belongs to the UbiA prenyltransferase family. Protoheme IX farnesyltransferase subfamily.

Its subcellular location is the cell inner membrane. It carries out the reaction heme b + (2E,6E)-farnesyl diphosphate + H2O = Fe(II)-heme o + diphosphate. The protein operates within porphyrin-containing compound metabolism; heme O biosynthesis; heme O from protoheme: step 1/1. Its function is as follows. Converts heme B (protoheme IX) to heme O by substitution of the vinyl group on carbon 2 of heme B porphyrin ring with a hydroxyethyl farnesyl side group. The chain is Protoheme IX farnesyltransferase from Bordetella petrii (strain ATCC BAA-461 / DSM 12804 / CCUG 43448).